The chain runs to 209 residues: Large ribosomal subunit protein uL4 (209 aa).

The disordered stretch occupies residues 50-78 (STLKKGEVSGGGKKPYQQKHTGRARQGSI).

This sequence belongs to the universal ribosomal protein uL4 family. As to quaternary structure, part of the 50S ribosomal subunit.

One of the primary rRNA binding proteins, this protein initially binds near the 5'-end of the 23S rRNA. It is important during the early stages of 50S assembly. It makes multiple contacts with different domains of the 23S rRNA in the assembled 50S subunit and ribosome. Functionally, forms part of the polypeptide exit tunnel. The protein is Large ribosomal subunit protein uL4 of Mycoplasmoides gallisepticum (strain R(low / passage 15 / clone 2)) (Mycoplasma gallisepticum).